The chain runs to 356 residues: Histidinol-phosphate aminotransferase (356 aa).

Lys214 is modified (N6-(pyridoxal phosphate)lysine).

Belongs to the class-II pyridoxal-phosphate-dependent aminotransferase family. Histidinol-phosphate aminotransferase subfamily. Homodimer. Requires pyridoxal 5'-phosphate as cofactor.

It carries out the reaction L-histidinol phosphate + 2-oxoglutarate = 3-(imidazol-4-yl)-2-oxopropyl phosphate + L-glutamate. The protein operates within amino-acid biosynthesis; L-histidine biosynthesis; L-histidine from 5-phospho-alpha-D-ribose 1-diphosphate: step 7/9. This is Histidinol-phosphate aminotransferase from Escherichia coli O127:H6 (strain E2348/69 / EPEC).